The chain runs to 269 residues: Aminoglycoside (3'') (9) adenylyltransferase (269 aa).

The enzyme catalyses streptomycin + ATP = 3''-O-adenylylstreptomycin + diphosphate. The catalysed reaction is spectinomycin + ATP = 9-O-adenylylspectinomycin + diphosphate. Mediates bacterial resistance to the antibiotic spectinomycin and probably also to streptomycin. This Rhizobium radiobacter (Agrobacterium tumefaciens) protein is Aminoglycoside (3'') (9) adenylyltransferase.